We begin with the raw amino-acid sequence, 344 residues long: MKPKLLFEQLLSRQDLSSDQMQEVIHACMTGEFSDVQIATFLALMRMKGETVNELTAAAQVMRQLAHKIDLGNPLIDIVGTGGDGRNTFNVSTACSFVVAAAGIKVAKHGNRSVSSRSGSADLLEQAGFILNLSDSQVQNCINQCQLAFLFAPHYHPAMQHARAARQQLGIRTLFNLLGPLINPAQVKRQVVGVFSTNWLKTIATVLANLGSERSLVISSQDGLDEISIAAKSEVVEYRDGNFKQWFISPEDYGLKHSSLDAIIVDSPEQSLHLIQSVLSGDSGPARDIVLLNSAAAIYCAKDGISFDAAIEEARIAIDSGKANLCFNKLRLLTQTLNKESNHE.

5-phospho-alpha-D-ribose 1-diphosphate contacts are provided by residues Gly-80, 83–84 (GD), Thr-88, 90–93 (NVST), 108–116 (KHGNRSVSS), and Ser-120. Position 80 (Gly-80) interacts with anthranilate. Residue Ser-92 coordinates Mg(2+). Asn-111 contributes to the anthranilate binding site. Anthranilate is bound at residue Arg-166. Asp-225 and Glu-226 together coordinate Mg(2+).

This sequence belongs to the anthranilate phosphoribosyltransferase family. In terms of assembly, homodimer. Mg(2+) serves as cofactor.

It catalyses the reaction N-(5-phospho-beta-D-ribosyl)anthranilate + diphosphate = 5-phospho-alpha-D-ribose 1-diphosphate + anthranilate. It functions in the pathway amino-acid biosynthesis; L-tryptophan biosynthesis; L-tryptophan from chorismate: step 2/5. In terms of biological role, catalyzes the transfer of the phosphoribosyl group of 5-phosphorylribose-1-pyrophosphate (PRPP) to anthranilate to yield N-(5'-phosphoribosyl)-anthranilate (PRA). In Legionella pneumophila (strain Paris), this protein is Anthranilate phosphoribosyltransferase.